The sequence spans 620 residues: Chaperone protein HscA homolog (620 aa).

Belongs to the heat shock protein 70 family.

Its function is as follows. Chaperone involved in the maturation of iron-sulfur cluster-containing proteins. Has a low intrinsic ATPase activity which is markedly stimulated by HscB. This Shewanella loihica (strain ATCC BAA-1088 / PV-4) protein is Chaperone protein HscA homolog.